The primary structure comprises 105 residues: Chloroacetanilide N-alkylformylase 1, ferredoxin component (105 aa).

A 2Fe-2S ferredoxin-type domain is found at 2–105 (PTIIVTTRDG…GLRVAIAPED (104 aa)). Residues C40, C46, C49, and C86 each contribute to the [2Fe-2S] cluster site.

The protein belongs to the adrenodoxin/putidaredoxin family. As to quaternary structure, the chloroacetanilide N-alkylformylase multicomponent enzyme system is composed of an oxygenase component (CndA) and an electron transfer component formed by a ferredoxin reductase (CndC1) and a ferredoxin (CndB1). In vitro, chloroacetanilide N-alkylformylase assays in which CndB1 is substituted for CndB2 demonstrate that the two enzymes possess nearly identical activities. It depends on [2Fe-2S] cluster as a cofactor.

Component of the chloroacetanilide N-alkylformylase multicomponent enzyme system involved in the degradation of chloroacetanilide herbicides (N-alkoxyalkyl-N-chloroacetyl-substituted aniline derivatives). In vitro, functions as an intermediate electron transfer protein. This Rhizorhabdus wittichii (strain DC-6 / KACC 16600) (Sphingomonas wittichii) protein is Chloroacetanilide N-alkylformylase 1, ferredoxin component.